A 220-amino-acid chain; its full sequence is Adapter protein MecA (220 aa).

The protein belongs to the MecA family. In terms of assembly, homodimer.

In terms of biological role, enables the recognition and targeting of unfolded and aggregated proteins to the ClpC protease or to other proteins involved in proteolysis. This chain is Adapter protein MecA, found in Macrococcus caseolyticus (strain JCSC5402) (Macrococcoides caseolyticum).